Consider the following 123-residue polypeptide: Large ribosomal subunit protein bL12 (123 aa).

The protein belongs to the bacterial ribosomal protein bL12 family. As to quaternary structure, homodimer. Part of the ribosomal stalk of the 50S ribosomal subunit. Forms a multimeric L10(L12)X complex, where L10 forms an elongated spine to which 2 to 4 L12 dimers bind in a sequential fashion. Binds GTP-bound translation factors.

Functionally, forms part of the ribosomal stalk which helps the ribosome interact with GTP-bound translation factors. Is thus essential for accurate translation. This chain is Large ribosomal subunit protein bL12, found in Shewanella sp. (strain MR-4).